The following is a 525-amino-acid chain: GMP synthase [glutamine-hydrolyzing] (525 aa).

Positions 9-207 (KILILDFGSQ…IVDICGCDTL (199 aa)) constitute a Glutamine amidotransferase type-1 domain. The Nucleophile role is filled by C86. Residues H181 and E183 contribute to the active site. The 193-residue stretch at 208-400 (WTPANIAQDA…LGLPYDMVYR (193 aa)) folds into the GMPS ATP-PPase domain. 235–241 (SGGVDSS) serves as a coordination point for ATP.

As to quaternary structure, homodimer.

The enzyme catalyses XMP + L-glutamine + ATP + H2O = GMP + L-glutamate + AMP + diphosphate + 2 H(+). Its pathway is purine metabolism; GMP biosynthesis; GMP from XMP (L-Gln route): step 1/1. Its function is as follows. Catalyzes the synthesis of GMP from XMP. This Marinomonas sp. (strain MWYL1) protein is GMP synthase [glutamine-hydrolyzing].